Consider the following 245-residue polypeptide: 1-(5-phosphoribosyl)-5-[(5-phosphoribosylamino)methylideneamino] imidazole-4-carboxamide isomerase (245 aa).

The active-site Proton acceptor is Asp8. The active-site Proton donor is Asp129.

This sequence belongs to the HisA/HisF family.

The protein resides in the cytoplasm. It catalyses the reaction 1-(5-phospho-beta-D-ribosyl)-5-[(5-phospho-beta-D-ribosylamino)methylideneamino]imidazole-4-carboxamide = 5-[(5-phospho-1-deoxy-D-ribulos-1-ylimino)methylamino]-1-(5-phospho-beta-D-ribosyl)imidazole-4-carboxamide. It participates in amino-acid biosynthesis; L-histidine biosynthesis; L-histidine from 5-phospho-alpha-D-ribose 1-diphosphate: step 4/9. The chain is 1-(5-phosphoribosyl)-5-[(5-phosphoribosylamino)methylideneamino] imidazole-4-carboxamide isomerase from Geotalea daltonii (strain DSM 22248 / JCM 15807 / FRC-32) (Geobacter daltonii).